The primary structure comprises 93 residues: MSTGNESYNLRYPKGFKGYPYNMYKLEGYGTPKGYITLIGVVATLTVSGLFFAKTRSNKREYPTHNKEWRAKTLAYAKETNADPIYQLPKDKI.

At 2-33 the chain is on the mitochondrial matrix side; the sequence is STGNESYNLRYPKGFKGYPYNMYKLEGYGTPK. The helical transmembrane segment at 34–53 threads the bilayer; sequence GYITLIGVVATLTVSGLFFA. Residues 54 to 93 lie on the Mitochondrial intermembrane side of the membrane; the sequence is KTRSNKREYPTHNKEWRAKTLAYAKETNADPIYQLPKDKI.

Belongs to the cytochrome c oxidase IV family. Component of the cytochrome c oxidase (complex IV, CIV), a multisubunit enzyme composed of a catalytic core of 3 subunits and seevral supernumerary subunits. The complex exists as a monomer or a dimer and forms supercomplexes (SCs) in the inner mitochondrial membrane with ubiquinol-cytochrome c oxidoreductase (cytochrome b-c1 complex, complex III, CIII).

The protein localises to the mitochondrion inner membrane. The protein operates within energy metabolism; oxidative phosphorylation. Its function is as follows. Component of the cytochrome c oxidase, the last enzyme in the mitochondrial electron transport chain which drives oxidative phosphorylation. The respiratory chain contains 3 multisubunit complexes succinate dehydrogenase (complex II, CII), ubiquinol-cytochrome c oxidoreductase (cytochrome b-c1 complex, complex III, CIII) and cytochrome c oxidase (complex IV, CIV), that cooperate to transfer electrons derived from NADH and succinate to molecular oxygen, creating an electrochemical gradient over the inner membrane that drives transmembrane transport and the ATP synthase. Cytochrome c oxidase is the component of the respiratory chain that catalyzes the reduction of oxygen to water. Electrons originating from reduced cytochrome c in the intermembrane space (IMS) are transferred via the dinuclear copper A center (CU(A)) of subunit 2 and heme A of subunit 1 to the active site in subunit 1, a binuclear center (BNC) formed by heme A3 and copper B (CU(B)). The BNC reduces molecular oxygen to 2 water molecules using 4 electrons from cytochrome c in the IMS and 4 protons from the mitochondrial matrix. The protein is Cytochrome c oxidase polypeptide 6, mitochondrial (cxfA) of Dictyostelium discoideum (Social amoeba).